We begin with the raw amino-acid sequence, 211 residues long: uncharacterized protein (211 aa).

2 stretches are compositionally biased toward low complexity: residues 1-19 (MQDP…SSSD) and 61-74 (SPSV…SSNA). Disordered stretches follow at residues 1-27 (MQDP…STGS) and 54-94 (ASSR…EPHR).

Interacts with RLK902. Expressed in inflorescences, stems, rosette leaves and weakly in roots.

This is an uncharacterized protein from Arabidopsis thaliana (Mouse-ear cress).